Consider the following 118-residue polypeptide: Cytochrome b-c1 complex subunit 7 (118 aa).

The igE-binding. Immunodominant epitope; induces specific IgE antibody production in mice. Causes degranulation of rat basophilic leukemia (RBL) cells and the release of beta-hexosaminidase from them stretch occupies residues 1–32 (MVHLTKTLRFINNPGFRKFYYGLQGYNKYGLY).

The protein belongs to the UQCRB/QCR7 family. As to quaternary structure, component of the ubiquinol-cytochrome c oxidoreductase (cytochrome b-c1 complex, complex III, CIII), a multisubunit enzyme composed of 3 respiratory subunits cytochrome b, cytochrome c1 and Rieske protein, 2 core protein subunits, and additional low-molecular weight protein subunits. The complex exists as an obligatory dimer and forms supercomplexes (SCs) in the inner mitochondrial membrane with cytochrome c oxidase (complex IV, CIV).

Its subcellular location is the mitochondrion inner membrane. Its function is as follows. Component of the ubiquinol-cytochrome c oxidoreductase, a multisubunit transmembrane complex that is part of the mitochondrial electron transport chain which drives oxidative phosphorylation. The respiratory chain contains 3 multisubunit complexes succinate dehydrogenase (complex II, CII), ubiquinol-cytochrome c oxidoreductase (cytochrome b-c1 complex, complex III, CIII) and cytochrome c oxidase (complex IV, CIV), that cooperate to transfer electrons derived from NADH and succinate to molecular oxygen, creating an electrochemical gradient over the inner membrane that drives transmembrane transport and the ATP synthase. The cytochrome b-c1 complex catalyzes electron transfer from ubiquinol to cytochrome c, linking this redox reaction to translocation of protons across the mitochondrial inner membrane, with protons being carried across the membrane as hydrogens on the quinol. In the process called Q cycle, 2 protons are consumed from the matrix, 4 protons are released into the intermembrane space and 2 electrons are passed to cytochrome c. The chain is Cytochrome b-c1 complex subunit 7 from Dermatophagoides pteronyssinus (European house dust mite).